The primary structure comprises 265 residues: MPSLPHSHRVMLDSVTHSTFLPNASFCDPLMSWTDLFSNEEYYPAFEHQTACDSYWTSVHPEYWTKRHVWEWLQFCCDQYKLDTNCISFCNFNISGLQLCSMTQEEFVEAAGLCGEYLYFILQNIRTQGYSFFNDAEESKATIKDYADSNCLKTSGIKSQDCHSHSRTSLQSSHLWEFVRDLLLSPEENCGILEWEDREQGIFRVVKSEALAKMWGQRKKNDRMTYEKLSRALRYYYKTGILERVDRRLVYKFGKNAHGWQEDKL.

A PNT domain is found at 43–129; that stretch reads YPAFEHQTAC…FILQNIRTQG (87 aa). The ETS DNA-binding region spans 173-254; sequence SHLWEFVRDL…VDRRLVYKFG (82 aa).

Belongs to the ETS family. As to expression, expressed exclusively in tissues with a high content of epithelial cells. Highly expressed in salivary gland, mammary gland, kidney and prostate. Weakly expressed in placenta and lung. Isoform 1 and isoform 2 are differentially expressed in different tissues. In the kidney, only isoform 1 was expressed, while prostate expressed both isoforms, with levels of isoform 2 being higher. Expression is up-regulated during keratinocyte differentiation. Several epithelial carcinoma cell lines showed lack of expression.

The protein resides in the nucleus. Transcriptionally activator that may play a role in regulating the later stages of keratinocytes terminal differentiation. Functionally, isoform 2 binds to DNA sequences containing the consensus nucleotide core sequence GGA[AT]. Transcriptionally activates SPRR2A and the parotid gland-specific PSP promoters. The protein is ETS-related transcription factor Elf-5 (ELF5) of Homo sapiens (Human).